The primary structure comprises 273 residues: Thiazole synthase (273 aa).

Lysine 113 functions as the Schiff-base intermediate with DXP in the catalytic mechanism. 1-deoxy-D-xylulose 5-phosphate is bound by residues glycine 174, 201–202 (AG), and 223–224 (NT).

The protein belongs to the ThiG family. Homotetramer. Forms heterodimers with either ThiH or ThiS.

It is found in the cytoplasm. It carries out the reaction [ThiS sulfur-carrier protein]-C-terminal-Gly-aminoethanethioate + 2-iminoacetate + 1-deoxy-D-xylulose 5-phosphate = [ThiS sulfur-carrier protein]-C-terminal Gly-Gly + 2-[(2R,5Z)-2-carboxy-4-methylthiazol-5(2H)-ylidene]ethyl phosphate + 2 H2O + H(+). It functions in the pathway cofactor biosynthesis; thiamine diphosphate biosynthesis. Functionally, catalyzes the rearrangement of 1-deoxy-D-xylulose 5-phosphate (DXP) to produce the thiazole phosphate moiety of thiamine. Sulfur is provided by the thiocarboxylate moiety of the carrier protein ThiS. In vitro, sulfur can be provided by H(2)S. This is Thiazole synthase from Salinibacter ruber (strain DSM 13855 / M31).